Reading from the N-terminus, the 804-residue chain is Leucine--tRNA ligase (804 aa).

The short motif at 39 to 50 (PYPSGAGLHVGH) is the 'HIGH' region element. The 'KMSKS' region signature appears at 580-584 (KMSKS). An ATP-binding site is contributed by K583.

The protein belongs to the class-I aminoacyl-tRNA synthetase family.

It is found in the cytoplasm. It catalyses the reaction tRNA(Leu) + L-leucine + ATP = L-leucyl-tRNA(Leu) + AMP + diphosphate. This is Leucine--tRNA ligase from Mycoplasma mycoides subsp. mycoides SC (strain CCUG 32753 / NCTC 10114 / PG1).